Here is a 441-residue protein sequence, read N- to C-terminus: ACT domain-containing protein ACR8 (441 aa).

ACT domains lie at 34–110 (IVKV…NIEV), 115–196 (ALEL…SAAK), 248–324 (VVNV…ALEG), and 326–405 (RLEL…TMYH).

In terms of tissue distribution, expressed in roots, leaves, flowers and siliques.

In terms of biological role, may bind amino acids. This Arabidopsis thaliana (Mouse-ear cress) protein is ACT domain-containing protein ACR8.